The sequence spans 413 residues: Porin PorA (413 aa).

The N-terminal stretch at 1–22 (MKKVVSSLLIILGAAMLIFAIA) is a signal peptide. A disordered region spans residues 265-288 (TKSAADSKDDKKKDGDKKDEKSPE).

It belongs to the PorA family.

The protein resides in the secreted. It localises to the cell wall. Its function is as follows. Forms water-filled channels that favor the permeation of cations. This Corynebacterium resistens (strain DSM 45100 / JCM 12819 / GTC 2026 / SICGH 158) protein is Porin PorA.